A 200-amino-acid polypeptide reads, in one-letter code: Recombination protein RecR (200 aa).

A C4-type zinc finger spans residues 58–73; that stretch reads CSLCCNLTDEDPCSIC. Residues 81 to 176 enclose the Toprim domain; the sequence is NLLCVVEEPR…KVTRIAHGIP (96 aa).

It belongs to the RecR family.

May play a role in DNA repair. It seems to be involved in an RecBC-independent recombinational process of DNA repair. It may act with RecF and RecO. This is Recombination protein RecR from Desulforamulus reducens (strain ATCC BAA-1160 / DSM 100696 / MI-1) (Desulfotomaculum reducens).